Reading from the N-terminus, the 222-residue chain is MRVKICGFTDPGQAQAAARLGVHALGFVCVPGTPRYVDAARLREIAAALPPFTFKVGVFVDAPVEAMRAAVEAGELQGVQLHGEESPETCAHLARTLPGILRIKALRVREPADLEKIALYVDAIEAVLLDAWHPTQAGGTGRTLDWKALQGFCPALPWMLSGGLRADNLAQALDILTPDAVDLSSGVENGVPGQKDLSKITQILHIAQGNTGQRRPPLCDGT.

This sequence belongs to the TrpF family.

It carries out the reaction N-(5-phospho-beta-D-ribosyl)anthranilate = 1-(2-carboxyphenylamino)-1-deoxy-D-ribulose 5-phosphate. The protein operates within amino-acid biosynthesis; L-tryptophan biosynthesis; L-tryptophan from chorismate: step 3/5. In Gloeobacter violaceus (strain ATCC 29082 / PCC 7421), this protein is N-(5'-phosphoribosyl)anthranilate isomerase.